Reading from the N-terminus, the 514-residue chain is Peptide chain release factor 3 (514 aa).

The region spanning 8–268 (KKRRTFAIIS…TFLKFAPEPH (261 aa)) is the tr-type G domain. Residues 17 to 24 (SHPDAGKT), 85 to 89 (DTPGH), and 139 to 142 (NKLD) each bind GTP.

It belongs to the TRAFAC class translation factor GTPase superfamily. Classic translation factor GTPase family. PrfC subfamily.

It localises to the cytoplasm. Functionally, increases the formation of ribosomal termination complexes and stimulates activities of RF-1 and RF-2. It binds guanine nucleotides and has strong preference for UGA stop codons. It may interact directly with the ribosome. The stimulation of RF-1 and RF-2 is significantly reduced by GTP and GDP, but not by GMP. The chain is Peptide chain release factor 3 from Streptococcus thermophilus (strain CNRZ 1066).